Reading from the N-terminus, the 345-residue chain is Gibberellin 2-beta-dioxygenase 2 (345 aa).

In terms of domain architecture, Fe2OG dioxygenase spans 170–285 (HSDSLLRINH…RMSMMYFAAP (116 aa)). Fe cation is bound by residues His-209, Asp-211, and His-266. Arg-276 is a catalytic residue.

The protein belongs to the iron/ascorbate-dependent oxidoreductase family. GA2OX subfamily. Fe cation is required as a cofactor. Predominantly expressed in leaves.

The enzyme catalyses gibberellin A1 + 2-oxoglutarate + O2 = gibberellin A8 + succinate + CO2. It participates in plant hormone biosynthesis; gibberellin biosynthesis. Its function is as follows. Catalyzes the 2-beta-hydroxylation of several biologically active gibberellins, leading to the homeostatic regulation of their endogenous level. Catabolism of gibberellins (GAs) plays a central role in plant development. Converts GA9/GA20 to GA51/GA29 and GA4/GA1 to GA34/GA8. This is Gibberellin 2-beta-dioxygenase 2 (GA2OX2) from Pisum sativum (Garden pea).